Consider the following 780-residue polypeptide: Subtilisin-like protease SBT1.3 (780 aa).

The first 25 residues, 1-25, serve as a signal peptide directing secretion; sequence MANKNPLQKPFLFIILSINLIFLQA. Positions 26–120 are cleaved as a propeptide — activation peptide; it reads ETTTQISTKK…VIPETRYELH (95 aa). Positions 36-120 constitute an Inhibitor I9 domain; the sequence is TYVIHMDKSA…VIPETRYELH (85 aa). Residues 116-628 form the Peptidase S8 domain; sequence RYELHTTRSP…AGHIDPLRAT (513 aa). The Charge relay system role is filled by aspartate 154. Asparagine 165 carries an N-linked (GlcNAc...) asparagine glycan. Histidine 227 (charge relay system) is an active-site residue. In terms of domain architecture, PA spans 384–477; sequence KQYPLVYLGR…GEKEGKLIKQ (94 aa). Residue asparagine 394 is glycosylated (N-linked (GlcNAc...) asparagine). The active-site Charge relay system is the serine 560. 2 N-linked (GlcNAc...) asparagine glycosylation sites follow: asparagine 663 and asparagine 731.

Belongs to the peptidase S8 family.

Its subcellular location is the secreted. The polypeptide is Subtilisin-like protease SBT1.3 (Arabidopsis thaliana (Mouse-ear cress)).